The following is a 411-amino-acid chain: Tyrosine--tRNA ligase (411 aa).

Tyr36 provides a ligand contact to L-tyrosine. The 'HIGH' region motif lies at Pro41–His50. The L-tyrosine site is built by Tyr172 and Gln176. Residues Lys232–Thr236 carry the 'KMSKS' region motif. ATP is bound at residue Lys235. The S4 RNA-binding domain occupies Tyr344–Ile409.

The protein belongs to the class-I aminoacyl-tRNA synthetase family. TyrS type 1 subfamily. As to quaternary structure, homodimer.

It is found in the cytoplasm. The catalysed reaction is tRNA(Tyr) + L-tyrosine + ATP = L-tyrosyl-tRNA(Tyr) + AMP + diphosphate + H(+). In terms of biological role, catalyzes the attachment of tyrosine to tRNA(Tyr) in a two-step reaction: tyrosine is first activated by ATP to form Tyr-AMP and then transferred to the acceptor end of tRNA(Tyr). This Malacoplasma penetrans (strain HF-2) (Mycoplasma penetrans) protein is Tyrosine--tRNA ligase.